Consider the following 78-residue polypeptide: Small ribosomal subunit protein bS18 (78 aa).

It belongs to the bacterial ribosomal protein bS18 family. In terms of assembly, part of the 30S ribosomal subunit. Forms a tight heterodimer with protein bS6.

Its function is as follows. Binds as a heterodimer with protein bS6 to the central domain of the 16S rRNA, where it helps stabilize the platform of the 30S subunit. This is Small ribosomal subunit protein bS18 from Kineococcus radiotolerans (strain ATCC BAA-149 / DSM 14245 / SRS30216).